The sequence spans 521 residues: Probable feruloyl esterase B-2 (521 aa).

A signal peptide spans 1-19 (MKVSLWLTLLGVNLSLALA). N-linked (GlcNAc...) asparagine glycosylation is found at Asn13, Asn53, Asn85, Asn98, and Asn138. 2 disulfide bridges follow: Cys28–Cys75 and Cys63–Cys114. 4 cysteine pairs are disulfide-bonded: Cys187–Cys440, Cys257–Cys274, Cys283–Cys291, and Cys506–Cys520. Catalysis depends on Ser188, which acts as the Acyl-ester intermediate. Asn235 carries N-linked (GlcNAc...) asparagine glycosylation. Asp258, Asp261, Val263, Asp265, and Ile267 together coordinate Ca(2+). Asp399 serves as the catalytic Charge relay system. Residue Asn419 is glycosylated (N-linked (GlcNAc...) asparagine). The active-site Charge relay system is the His439.

It belongs to the tannase family.

It is found in the secreted. It catalyses the reaction feruloyl-polysaccharide + H2O = ferulate + polysaccharide.. Its function is as follows. Involved in degradation of plant cell walls. Hydrolyzes the feruloyl-arabinose ester bond in arabinoxylans as well as the feruloyl-galactose and feruloyl-arabinose ester bonds in pectin. The sequence is that of Probable feruloyl esterase B-2 (faeB-2) from Aspergillus flavus (strain ATCC 200026 / FGSC A1120 / IAM 13836 / NRRL 3357 / JCM 12722 / SRRC 167).